Here is a 201-residue protein sequence, read N- to C-terminus: Ras-related protein Rab-1B (201 aa).

Met1 bears the N-acetylmethionine mark. 13 residues coordinate GTP: Ser17, Gly18, Val19, Gly20, Lys21, Ser22, Cys23, Tyr33, Thr34, Glu35, Ser36, Ser39, and Thr40. Ser22 provides a ligand contact to Mg(2+). The Switch 1 motif lies at 30–45 (DDTYTESYISTIGVDF). The Mg(2+) site is built by Thr40 and Asp63. Positions 64–83 (TAGQERFRTVTSSYYRGAHG) are switch 2 region; required for interaction with REP1/CHM. A Switch 2 motif is present at residues 65-80 (AGQERFRTVTSSYYRG). GTP-binding residues include Gly66, Asn121, Lys122, Asp124, Ser151, Ala152, and Lys153. The interval 173-201 (MGPGAASGGERPNLKIDSTPVKSASGGCC) is disordered. S-geranylgeranyl cysteine attachment occurs at residues Cys200 and Cys201. Cys201 bears the Cysteine methyl ester mark.

The protein belongs to the small GTPase superfamily. Rab family. Interacts with MICAL1 and MICAL2. Interacts (in GTP-bound form) with MICALCL, MICAL1 and MILCAL3. Interacts with GDI1; the interaction requires the GDP-bound state. Interacts with CHM/REP1; the interaction requires the GDP-bound form and is necessary for prenylation by GGTase II. Interacts with RabGAP TBC1D20. Interacts (in GDP-bound form) with lipid phosphatase MTMR6 (via GRAM domain); the interaction regulates MTMR6 recruitment to the endoplasmic reticulum-Golgi intermediate compartment. Interacts (in GDP-bound form) with lipid phosphatase MTMR7. Requires Mg(2+) as cofactor. In terms of processing, prenylated; by GGTase II, only after interaction of the substrate with Rab escort protein 1 (REP1).

Its subcellular location is the cytoplasm. It localises to the membrane. The protein localises to the preautophagosomal structure membrane. The protein resides in the perinuclear region. It carries out the reaction GTP + H2O = GDP + phosphate + H(+). Regulated by guanine nucleotide exchange factors (GEFs) which promote the exchange of bound GDP for free GTP. Regulated by GTPase activating proteins (GAPs) including TBC1D20 which increases the GTP hydrolysis activity. Inhibited by GDP dissociation inhibitors (GDIs). Functionally, the small GTPases Rab are key regulators of intracellular membrane trafficking, from the formation of transport vesicles to their fusion with membranes. Rabs cycle between an inactive GDP-bound form and an active GTP-bound form that is able to recruit to membranes different set of downstream effectors directly responsible for vesicle formation, movement, tethering and fusion. Plays a role in the initial events of the autophagic vacuole development which take place at specialized regions of the endoplasmic reticulum. Regulates vesicular transport between the endoplasmic reticulum and successive Golgi compartments. Required to modulate the compacted morphology of the Golgi. Promotes the recruitment of lipid phosphatase MTMR6 to the endoplasmic reticulum-Golgi intermediate compartment. This Rattus norvegicus (Rat) protein is Ras-related protein Rab-1B (Rab1b).